A 146-amino-acid chain; its full sequence is MSAALSRDATLLAFDYGEKRIGVAIGNLLTRTARALVIVPNLNREHRFKAVGELIAEWKPDALVVGLPLHPDGAPHEMTQRALRFGNQLNGRFNLPVSWVDERYSSVEARAGLRARGDAANRVDAEAARVILQQFLDGLPDQHEFN.

This sequence belongs to the YqgF nuclease family.

Its subcellular location is the cytoplasm. Could be a nuclease involved in processing of the 5'-end of pre-16S rRNA. The sequence is that of Putative pre-16S rRNA nuclease from Burkholderia thailandensis (strain ATCC 700388 / DSM 13276 / CCUG 48851 / CIP 106301 / E264).